Consider the following 478-residue polypeptide: MSQLLTARQAEELHKAMIAYLLSANLPKSAAALREELADSVQLDDSTAKKYEGLLEKKWTSVVRLQKKIMDLESRNNALQSELDSATPTSLARRNQDPVSWLPHAPARHILQSHREPVTCVGFHPVFSSLASGSDDTTIKIWDWELGELERTIKGHTKAVLDVDYGGPRGGTLLASCSSDLTIKLWDPSDGYKNIRTLPGHDHSVSAVRFIPSGAAGSPLSGNLLVSASRDKTLRIWDVTTGYCVKTLRGHVDWVRDVVASPDGRFLFSAGNDQVARLWDVSSGETKSTFLGHEHAVECVAFAPPTSYPHLAALAGLKKAPPSSSSAEYVATGSRDKSIRIWDARGTLIKTLIGHDNWVRALAFHPGGKYLLSVSDDKTLRCWDLTQECKCVRTVKDAHGHFISCIRWAPNIIKDAGVVNGDDTSTAASANGGALGASAINGVVPTGKKEDPGGGPMMGIRCVIATGSVDLKVRVFAS.

The region spanning 9-41 (QAEELHKAMIAYLLSANLPKSAAALREELADSV) is the LisH domain. Residues 60-87 (TSVVRLQKKIMDLESRNNALQSELDSAT) are a coiled coil. WD repeat units follow at residues 113–154 (SHRE…RTIK), 156–196 (HTKA…KNIR), 200–247 (GHDH…CVKT), 250–289 (GHVDWVRDVVASPDGRFLFSAGNDQVARLWDVSSGETKST), 292–352 (GHEH…IKTL), 354–393 (GHDNWVRALAFHPGGKYLLSVSDDKTLRCWDLTQECKCVR), 398–439 (AHGH…GASA), and 440–477 (INGVVPTGKKEDPGGGPMMGIRCVIATGSVDLKVRVFA).

It belongs to the WD repeat LIS1/nudF family. As to quaternary structure, self-associates. Interacts with NDL1 and dynein.

It is found in the cytoplasm. The protein localises to the cytoskeleton. It localises to the spindle pole. Positively regulates the activity of the minus-end directed microtubule motor protein dynein. May enhance dynein-mediated microtubule sliding by targeting dynein to the microtubule plus end. Required for nuclear migration during vegetative growth as well as development. Required for retrograde early endosome (EE) transport from the hyphal tip. Required for localization of dynein to the mitotic spindle poles. Recruits additional proteins to the dynein complex at SPBs. In Paracoccidioides brasiliensis (strain Pb03), this protein is Nuclear distribution protein PAC1.